The following is a 247-amino-acid chain: MQTHVLFEHPLNEKMRTWLRIEFLIQQMKALLPVSDHASALHFFRNVGDLLDVFERGDTRTELLKELERQQRKLQSWAEVPGVDNERIESLRHELKARSSMLMAAPRLGQTLREDRLIALVRQRLSIPGGCCSFDLPLLHVWLCSPQEERDVQVNSWLATLQPLTYTLDMILDLIRQSAPFRKQTSLNGFYQDNGDDADLLRLQLPLQEALYPQISGHKSRFAIRFMPLDSEHGRVPERFDFELACC.

It belongs to the ZapD family. Interacts with FtsZ.

It is found in the cytoplasm. In terms of biological role, cell division factor that enhances FtsZ-ring assembly. Directly interacts with FtsZ and promotes bundling of FtsZ protofilaments, with a reduction in FtsZ GTPase activity. This chain is Cell division protein ZapD, found in Cronobacter sakazakii (strain ATCC BAA-894) (Enterobacter sakazakii).